A 93-amino-acid chain; its full sequence is DNA/RNA-binding protein Alba (93 aa).

Lysine 11 bears the N6-acetyllysine mark.

The protein belongs to the histone-like Alba family. Post-translationally, acetylated. Acetylation at Lys-11 decreases DNA-binding affinity.

The protein resides in the cytoplasm. It localises to the chromosome. Functionally, binds double-stranded DNA tightly but without sequence specificity. Involved in DNA compaction. The sequence is that of DNA/RNA-binding protein Alba from Pyrococcus horikoshii (strain ATCC 700860 / DSM 12428 / JCM 9974 / NBRC 100139 / OT-3).